Consider the following 151-residue polypeptide: MERTFVMVKPDGVQRGLVGEVIGRLERKGLKIVAMKMLWIAREMAENHYAEHREKPFFSALVDYITSGPVVAMVVEGKNAIKVVRTLVGATNPAEAAPGTIRGDFGLDVGRNVVHASDSPQSAEREISLFFSDDEIVNWEKADEDWIYEER.

ATP is bound by residues Lys9, Phe57, Arg85, Thr91, Arg102, and Asn112. His115 (pros-phosphohistidine intermediate) is an active-site residue.

The protein belongs to the NDK family. The cofactor is Mg(2+).

Its subcellular location is the cytoplasm. The enzyme catalyses a 2'-deoxyribonucleoside 5'-diphosphate + ATP = a 2'-deoxyribonucleoside 5'-triphosphate + ADP. The catalysed reaction is a ribonucleoside 5'-diphosphate + ATP = a ribonucleoside 5'-triphosphate + ADP. Its function is as follows. Major role in the synthesis of nucleoside triphosphates other than ATP. The ATP gamma phosphate is transferred to the NDP beta phosphate via a ping-pong mechanism, using a phosphorylated active-site intermediate. This chain is Nucleoside diphosphate kinase, found in Archaeoglobus fulgidus (strain ATCC 49558 / DSM 4304 / JCM 9628 / NBRC 100126 / VC-16).